Consider the following 310-residue polypeptide: tRNA pseudouridine synthase B (310 aa).

The active-site Nucleophile is the aspartate 49.

This sequence belongs to the pseudouridine synthase TruB family. Type 1 subfamily.

It carries out the reaction uridine(55) in tRNA = pseudouridine(55) in tRNA. Functionally, responsible for synthesis of pseudouridine from uracil-55 in the psi GC loop of transfer RNAs. This Idiomarina loihiensis (strain ATCC BAA-735 / DSM 15497 / L2-TR) protein is tRNA pseudouridine synthase B.